The primary structure comprises 180 residues: ATP synthase subunit delta, chloroplastic (180 aa).

Belongs to the ATPase delta chain family. In terms of assembly, F-type ATPases have 2 components, F(1) - the catalytic core - and F(0) - the membrane proton channel. F(1) has five subunits: alpha(3), beta(3), gamma(1), delta(1), epsilon(1). CF(0) has four main subunits: a(1), b(1), b'(1) and c(10-14). The alpha and beta chains form an alternating ring which encloses part of the gamma chain. F(1) is attached to F(0) by a central stalk formed by the gamma and epsilon chains, while a peripheral stalk is formed by the delta, b and b' chains.

It localises to the plastid. The protein resides in the chloroplast thylakoid membrane. In terms of biological role, f(1)F(0) ATP synthase produces ATP from ADP in the presence of a proton or sodium gradient. F-type ATPases consist of two structural domains, F(1) containing the extramembraneous catalytic core and F(0) containing the membrane proton channel, linked together by a central stalk and a peripheral stalk. During catalysis, ATP synthesis in the catalytic domain of F(1) is coupled via a rotary mechanism of the central stalk subunits to proton translocation. Its function is as follows. This protein is part of the stalk that links CF(0) to CF(1). It either transmits conformational changes from CF(0) to CF(1) or is implicated in proton conduction. This Rhodomonas salina (Cryptomonas salina) protein is ATP synthase subunit delta, chloroplastic.